Consider the following 162-residue polypeptide: Regulator of sigma D (162 aa).

Belongs to the Rsd/AlgQ family. In terms of assembly, interacts with RpoD.

It is found in the cytoplasm. Functionally, binds RpoD and negatively regulates RpoD-mediated transcription activation by preventing the interaction between the primary sigma factor RpoD with the catalytic core of the RNA polymerase and with promoter DNA. May be involved in replacement of the RNA polymerase sigma subunit from RpoD to RpoS during the transition from exponential growth to the stationary phase. This Salmonella choleraesuis (strain SC-B67) protein is Regulator of sigma D.